The sequence spans 26 residues: uncharacterized protein (26 aa).

Phosphorylated by YfhK.

Its function is as follows. Probable member of a two-component regulatory system YfhA/YfhK. This is an uncharacterized protein from Klebsiella oxytoca.